The sequence spans 117 residues: Large ribosomal subunit protein bL20 (117 aa).

This sequence belongs to the bacterial ribosomal protein bL20 family.

Binds directly to 23S ribosomal RNA and is necessary for the in vitro assembly process of the 50S ribosomal subunit. It is not involved in the protein synthesizing functions of that subunit. This chain is Large ribosomal subunit protein bL20, found in Pasteurella multocida (strain Pm70).